A 121-amino-acid chain; its full sequence is UPF0102 protein Syncc9902_1284 (121 aa).

It belongs to the UPF0102 family.

The chain is UPF0102 protein Syncc9902_1284 from Synechococcus sp. (strain CC9902).